Here is a 360-residue protein sequence, read N- to C-terminus: Protein AIR1 (360 aa).

S37 carries the post-translational modification Phosphoserine. 4 consecutive CCHC-type zinc fingers follow at residues 74 to 91, 112 to 129, 134 to 151, and 173 to 190; these read PKCN…NCPH, IICT…QCPH, VFCT…RCPS, and VFCY…DCAE. Residues 265–360 are disordered; it reads KWKGKVQSTR…SNKSQRNGRY (96 aa). The span at 274 to 286 shows a compositional bias: low complexity; the sequence is RNKNSSNNRYESS. Polar residues predominate over residues 317–333; it reads RSSQNNRTNDYSSQFSY. Positions 349–360 are enriched in low complexity; sequence SSSNKSQRNGRY.

This sequence belongs to the AIR1 family. As to quaternary structure, component of the TRAMP complex (also called TRF4 complex) composed of at least HUL4, MTR4, PAP2/TFR4 and either AIR1 or AIR2. Component of the TRAMP5 complex composed of at least AIR1, MTR4 and TRF5. Interacts with HMT1 and NPL3. The interaction with NPL3 requires the presence of HMT1.

It localises to the cytoplasm. The protein localises to the nucleus. In terms of biological role, component of the TRAMP (TRF4) and TRAMP5 complexes which have a poly(A) RNA polymerase activity and are involved in a post-transcriptional quality control mechanism limiting inappropriate expression of genetic information. Polyadenylation is required for the degradative activity of the exosome on several of its nuclear RNA substrates like cryptic transcripts generated by RNA polymerase II and III, or hypomethylated pre-tRNAi-Met. Both complexes polyadenylate RNA processing and degradation intermediates of snRNAs, snoRNAs and mRNAs that accumulate in strains lacking a functional exosome. AIR1 also inhibits the methylation of NPL3 mediated by HMT1 through its interaction with HMT1. The polypeptide is Protein AIR1 (AIR1) (Saccharomyces cerevisiae (strain ATCC 204508 / S288c) (Baker's yeast)).